A 166-amino-acid chain; its full sequence is RNA pyrophosphohydrolase (166 aa).

The Nudix hydrolase domain maps to P8–K158. Residues G47–N68 carry the Nudix box motif.

This sequence belongs to the Nudix hydrolase family. RppH subfamily. The cofactor is a divalent metal cation.

Functionally, accelerates the degradation of transcripts by removing pyrophosphate from the 5'-end of triphosphorylated RNA, leading to a more labile monophosphorylated state that can stimulate subsequent ribonuclease cleavage. The chain is RNA pyrophosphohydrolase from Afipia carboxidovorans (strain ATCC 49405 / DSM 1227 / KCTC 32145 / OM5) (Oligotropha carboxidovorans).